The sequence spans 194 residues: Crossover junction endodeoxyribonuclease RuvC (194 aa).

Residues aspartate 8, glutamate 72, and aspartate 144 contribute to the active site. Residues aspartate 8, glutamate 72, and aspartate 144 each contribute to the Mg(2+) site.

This sequence belongs to the RuvC family. In terms of assembly, homodimer which binds Holliday junction (HJ) DNA. The HJ becomes 2-fold symmetrical on binding to RuvC with unstacked arms; it has a different conformation from HJ DNA in complex with RuvA. In the full resolvosome a probable DNA-RuvA(4)-RuvB(12)-RuvC(2) complex forms which resolves the HJ. Requires Mg(2+) as cofactor.

It localises to the cytoplasm. It catalyses the reaction Endonucleolytic cleavage at a junction such as a reciprocal single-stranded crossover between two homologous DNA duplexes (Holliday junction).. Its function is as follows. The RuvA-RuvB-RuvC complex processes Holliday junction (HJ) DNA during genetic recombination and DNA repair. Endonuclease that resolves HJ intermediates. Cleaves cruciform DNA by making single-stranded nicks across the HJ at symmetrical positions within the homologous arms, yielding a 5'-phosphate and a 3'-hydroxyl group; requires a central core of homology in the junction. The consensus cleavage sequence is 5'-(A/T)TT(C/G)-3'. Cleavage occurs on the 3'-side of the TT dinucleotide at the point of strand exchange. HJ branch migration catalyzed by RuvA-RuvB allows RuvC to scan DNA until it finds its consensus sequence, where it cleaves and resolves the cruciform DNA. This chain is Crossover junction endodeoxyribonuclease RuvC, found in Psychrobacter cryohalolentis (strain ATCC BAA-1226 / DSM 17306 / VKM B-2378 / K5).